The chain runs to 359 residues: Heme A synthase (359 aa).

Transmembrane regions (helical) follow at residues 8–28, 94–114, 124–144, 159–179, and 215–235; these read IMSIWLIVSTLLLLLMIVVGG, LLGRITGIIIIIPFLIFYYLK, LLLITCLVIIQGFMGWYMVKS, GHLLLAVVIYHQLIAELLIII, and IIIFLLYTQIMFGALVAGLDA. A heme-binding site is contributed by His274. 3 helical membrane-spanning segments follow: residues 276-296, 303-323, and 328-348; these read WFGILISCLIICYAIWLIILN, MGMVAACLVLVQVTTGIITLV, and ILAALTHQVGAILILTTFLFI. Residue His334 participates in heme binding.

The protein belongs to the COX15/CtaA family. Type 2 subfamily. As to quaternary structure, interacts with CtaB. Heme b is required as a cofactor.

It localises to the cell membrane. The enzyme catalyses Fe(II)-heme o + 2 A + H2O = Fe(II)-heme a + 2 AH2. The protein operates within porphyrin-containing compound metabolism; heme A biosynthesis; heme A from heme O: step 1/1. Catalyzes the conversion of heme O to heme A by two successive hydroxylations of the methyl group at C8. The first hydroxylation forms heme I, the second hydroxylation results in an unstable dihydroxymethyl group, which spontaneously dehydrates, resulting in the formyl group of heme A. In Orientia tsutsugamushi (strain Ikeda) (Rickettsia tsutsugamushi), this protein is Heme A synthase.